A 248-amino-acid polypeptide reads, in one-letter code: 4-hydroxy-tetrahydrodipicolinate reductase (248 aa).

G13–L18 provides a ligand contact to NAD(+). R36 serves as a coordination point for NADP(+). NAD(+) contacts are provided by residues G84 to T86 and A108 to F111. H140 acts as the Proton donor/acceptor in catalysis. H141 serves as a coordination point for (S)-2,3,4,5-tetrahydrodipicolinate. K144 (proton donor) is an active-site residue. G150–T151 is a (S)-2,3,4,5-tetrahydrodipicolinate binding site.

The protein belongs to the DapB family.

Its subcellular location is the cytoplasm. The enzyme catalyses (S)-2,3,4,5-tetrahydrodipicolinate + NAD(+) + H2O = (2S,4S)-4-hydroxy-2,3,4,5-tetrahydrodipicolinate + NADH + H(+). The catalysed reaction is (S)-2,3,4,5-tetrahydrodipicolinate + NADP(+) + H2O = (2S,4S)-4-hydroxy-2,3,4,5-tetrahydrodipicolinate + NADPH + H(+). The protein operates within amino-acid biosynthesis; L-lysine biosynthesis via DAP pathway; (S)-tetrahydrodipicolinate from L-aspartate: step 4/4. In terms of biological role, catalyzes the conversion of 4-hydroxy-tetrahydrodipicolinate (HTPA) to tetrahydrodipicolinate. The protein is 4-hydroxy-tetrahydrodipicolinate reductase of Gluconobacter oxydans (strain 621H) (Gluconobacter suboxydans).